We begin with the raw amino-acid sequence, 300 residues long: Cation-efflux pump FieF (300 aa).

4 helical membrane-spanning segments follow: residues 12–32 (AAIA…FAWW), 39–59 (ILAA…NLLV), 82–102 (AALA…LTGI), and 114–134 (PGVG…LVSF). Residues Asp45 and Asp49 each coordinate Zn(2+). Residues His153 and Asp157 each contribute to the Zn(2+) site. 2 helical membrane-spanning segments follow: residues 156 to 176 (SDVM…YGWH) and 178 to 198 (ADAL…LRMG).

The protein belongs to the cation diffusion facilitator (CDF) transporter (TC 2.A.4) family. FieF subfamily. As to quaternary structure, homodimer.

It is found in the cell inner membrane. It catalyses the reaction Zn(2+)(in) + H(+)(out) = Zn(2+)(out) + H(+)(in). It carries out the reaction Cd(2+)(in) + H(+)(out) = Cd(2+)(out) + H(+)(in). The enzyme catalyses Fe(2+)(in) + H(+)(out) = Fe(2+)(out) + H(+)(in). Functionally, divalent metal cation transporter which exports Zn(2+), Cd(2+) and possibly Fe(2+). May be involved in zinc and iron detoxification by efflux. The sequence is that of Cation-efflux pump FieF from Escherichia coli O157:H7 (strain EC4115 / EHEC).